Reading from the N-terminus, the 112-residue chain is Integration host factor subunit alpha (112 aa).

The protein belongs to the bacterial histone-like protein family. In terms of assembly, heterodimer of an alpha and a beta chain.

In terms of biological role, this protein is one of the two subunits of integration host factor, a specific DNA-binding protein that functions in genetic recombination as well as in transcriptional and translational control. The sequence is that of Integration host factor subunit alpha from Rhizobium etli (strain CIAT 652).